We begin with the raw amino-acid sequence, 446 residues long: 3-phosphoshikimate 1-carboxyvinyltransferase (446 aa).

The tract at residues 1–20 is disordered; the sequence is MIMAKPLSSRRAAPLAGSAP. 3-phosphoshikimate-binding residues include Lys-25, Ser-26, and Arg-30. Lys-25 lines the phosphoenolpyruvate pocket. Residues Gly-98 and Arg-126 each coordinate phosphoenolpyruvate. Ser-171, Gln-173, Asp-324, and Lys-351 together coordinate 3-phosphoshikimate. Gln-173 lines the phosphoenolpyruvate pocket. Asp-324 acts as the Proton acceptor in catalysis. 2 residues coordinate phosphoenolpyruvate: Arg-355 and Arg-399.

This sequence belongs to the EPSP synthase family. As to quaternary structure, monomer.

The protein resides in the cytoplasm. The catalysed reaction is 3-phosphoshikimate + phosphoenolpyruvate = 5-O-(1-carboxyvinyl)-3-phosphoshikimate + phosphate. It functions in the pathway metabolic intermediate biosynthesis; chorismate biosynthesis; chorismate from D-erythrose 4-phosphate and phosphoenolpyruvate: step 6/7. In terms of biological role, catalyzes the transfer of the enolpyruvyl moiety of phosphoenolpyruvate (PEP) to the 5-hydroxyl of shikimate-3-phosphate (S3P) to produce enolpyruvyl shikimate-3-phosphate and inorganic phosphate. The sequence is that of 3-phosphoshikimate 1-carboxyvinyltransferase from Paramagnetospirillum magneticum (strain ATCC 700264 / AMB-1) (Magnetospirillum magneticum).